Reading from the N-terminus, the 261-residue chain is tRNA threonylcarbamoyladenosine dehydratase (261 aa).

The helical transmembrane segment at 230–250 threads the bilayer; the sequence is CANGFGAATMITATFGFFAVS.

The protein belongs to the HesA/MoeB/ThiF family.

The protein localises to the membrane. Catalyzes the ATP-dependent dehydration of threonylcarbamoyladenosine at position 37 (t(6)A37) to form cyclic t(6)A37 (ct(6)A37) in tRNAs that read codons beginning with adenine. The sequence is that of tRNA threonylcarbamoyladenosine dehydratase (tcdA) from Haemophilus influenzae (strain ATCC 51907 / DSM 11121 / KW20 / Rd).